The following is a 488-amino-acid chain: uncharacterized protein (488 aa).

The protein belongs to the protein kinase superfamily. ADCK protein kinase family.

This is an uncharacterized protein from Mycobacterium tuberculosis (strain CDC 1551 / Oshkosh).